Here is a 592-residue protein sequence, read N- to C-terminus: Medium-chain-fatty-acid--[acyl-carrier-protein] ligase JamA (592 aa).

The protein belongs to the ATP-dependent AMP-binding enzyme family.

The enzyme catalyses a medium-chain fatty acid + holo-[ACP] + ATP = a medium-chain fatty acyl-[ACP] + AMP + diphosphate. The catalysed reaction is a medium-chain fatty acid + ATP + H(+) = a medium-chain fatty acyl-AMP + diphosphate. It catalyses the reaction a medium-chain fatty acyl-AMP + holo-[ACP] = a medium-chain fatty acyl-[ACP] + AMP + H(+). Functionally, ligase involved in the biosynthesis of jamaicamides, which show sodium channel blocking activity and fish toxicity. Initiates jamaicamide biosynthesis by the activation of the starter unit, 5-hexenoic acid, followed by the loading of the activated 5-hexenoic acid onto the acyl carrier protein JamC. In vitro, can also use 5-hexynoic acid, heptanoic acid, butanoic acid, hexanoic acid and benzoic acid. In Moorena producens (strain JHB), this protein is Medium-chain-fatty-acid--[acyl-carrier-protein] ligase JamA.